We begin with the raw amino-acid sequence, 196 residues long: Probable thymidylate kinase (196 aa).

8–15 (GIDASGKT) provides a ligand contact to ATP.

This sequence belongs to the thymidylate kinase family.

The catalysed reaction is dTMP + ATP = dTDP + ADP. The protein is Probable thymidylate kinase of Metallosphaera sedula (strain ATCC 51363 / DSM 5348 / JCM 9185 / NBRC 15509 / TH2).